We begin with the raw amino-acid sequence, 60 residues long: Large ribosomal subunit protein uL30 (60 aa).

This sequence belongs to the universal ribosomal protein uL30 family. In terms of assembly, part of the 50S ribosomal subunit.

This Histophilus somni (strain 2336) (Haemophilus somnus) protein is Large ribosomal subunit protein uL30.